Here is a 136-residue protein sequence, read N- to C-terminus: MSTKIQKTDAEWKALLAEKGAEPVAFEVTRHAATERPFTGKYEDNYAQGTYRCICCDAELFDSSSKFDAGCGWPSFSQELNKGAIEEHVDRAHGMTRTETVCANCGAHLGHVFPDGPTPTGLRYCMNSASLDFKPK.

The region spanning 9–136 (DAEWKALLAE…NSASLDFKPK (128 aa)) is the MsrB domain. The Zn(2+) site is built by Cys53, Cys56, Cys102, and Cys105. Cys125 acts as the Nucleophile in catalysis.

Belongs to the MsrB Met sulfoxide reductase family. Requires Zn(2+) as cofactor.

The enzyme catalyses L-methionyl-[protein] + [thioredoxin]-disulfide + H2O = L-methionyl-(R)-S-oxide-[protein] + [thioredoxin]-dithiol. This Polaromonas sp. (strain JS666 / ATCC BAA-500) protein is Peptide methionine sulfoxide reductase MsrB.